We begin with the raw amino-acid sequence, 497 residues long: Guanosine-5'-triphosphate,3'-diphosphate pyrophosphatase (497 aa).

It belongs to the GppA/Ppx family. GppA subfamily.

It catalyses the reaction guanosine 3'-diphosphate 5'-triphosphate + H2O = guanosine 3',5'-bis(diphosphate) + phosphate + H(+). It participates in purine metabolism; ppGpp biosynthesis; ppGpp from GTP: step 2/2. Functionally, catalyzes the conversion of pppGpp to ppGpp. Guanosine pentaphosphate (pppGpp) is a cytoplasmic signaling molecule which together with ppGpp controls the 'stringent response', an adaptive process that allows bacteria to respond to amino acid starvation, resulting in the coordinated regulation of numerous cellular activities. This chain is Guanosine-5'-triphosphate,3'-diphosphate pyrophosphatase, found in Photobacterium profundum (strain SS9).